The primary structure comprises 132 residues: UPF0299 membrane protein CKO_00648 (132 aa).

A run of 4 helical transmembrane segments spans residues 7 to 27 (IIWQ…AGIF), 31 to 51 (LLPI…VLLA), 63 to 83 (GCYV…VGVM), and 93 to 113 (FGPV…VVSW).

Belongs to the UPF0299 family.

Its subcellular location is the cell inner membrane. In Citrobacter koseri (strain ATCC BAA-895 / CDC 4225-83 / SGSC4696), this protein is UPF0299 membrane protein CKO_00648.